We begin with the raw amino-acid sequence, 908 residues long: Autophagy-related protein 9 (908 aa).

Residues 1–216 (MADGVIARLM…SGMWCIVVER (216 aa)) lie on the Cytoplasmic side of the membrane. The interval 64–162 (SRATVDGRIP…IDQELQPPLH (99 aa)) is disordered. A helical membrane pass occupies residues 217–237 (VLHLIKVAFVAFLLTFLSQCV). Residues 238–259 (DFKKIPSNQKLSQVLVPQCTRN) lie on the Lumenal side of the membrane. N-linked (GlcNAc...) asparagine glycosylation is present at N259. The chain crosses the membrane as a helical span at residues 260–280 (MSGLWNIGLWLFAFYFMWKSI). Over 281–433 (QYILDLRRLT…GILSAKLRSR (153 aa)) the chain is Cytoplasmic. An intramembrane segment occupies 434 to 454 (FIFAGVMILILSPFVAGYLII). Topologically, residues 455–525 (VYFLEYYNEI…KTSMVAKTVS (71 aa)) are cytoplasmic. A helical membrane pass occupies residues 526–546 (FIAGSIATVLALISVFDPEMF). Residues 547 to 555 (LGFEITHDR) lie on the Lumenal side of the membrane. The chain crosses the membrane as a helical span at residues 556–576 (TVLFYTAVFGAIWSVARGSVS). Residues 577 to 622 (EDNAVFDPEYALGNVVEYTHYQPEHWKDRWHSADVKAEFEELYKLK) are Cytoplasmic-facing. An intramembrane segment occupies 623-643 (LVIFIEEILSILTTPFVLFFS). Over 644 to 908 (LPKSADQIID…HLNRRLGGVR (265 aa)) the chain is Cytoplasmic. Disordered regions lie at residues 751–779 (AASR…AVMA) and 809–878 (QFRG…DSVV). A compositionally biased stretch (gly residues) spans 813-825 (GNQGDGHMMGGGS). Residues 839-852 (QTHDDESEDSRAGL) are compositionally biased toward basic and acidic residues.

This sequence belongs to the ATG9 family. Homotrimer; forms a homotrimer with a central pore that forms a path between the two membrane leaflets. Phosphorylated by apg-1. Apg-1 phosphorylation is required for preautophagosome elongation.

It is found in the preautophagosomal structure membrane. It localises to the cytoplasmic vesicle membrane. The protein localises to the golgi apparatus membrane. The protein resides in the endoplasmic reticulum membrane. The enzyme catalyses a 1,2-diacyl-sn-glycero-3-phosphocholine(in) = a 1,2-diacyl-sn-glycero-3-phosphocholine(out). It catalyses the reaction a 1,2-diacyl-sn-glycero-3-phospho-L-serine(in) = a 1,2-diacyl-sn-glycero-3-phospho-L-serine(out). The catalysed reaction is a 1,2-diacyl-sn-glycero-3-phosphoethanolamine(in) = a 1,2-diacyl-sn-glycero-3-phosphoethanolamine(out). It carries out the reaction a 1,2-diacyl-sn-glycero-3-phospho-(1D-myo-inositol-3-phosphate)(in) = a 1,2-diacyl-sn-glycero-3-phospho-(1D-myo-inositol-3-phosphate)(out). Phospholipid scramblase involved in autophagy and cytoplasm to vacuole transport (Cvt) vesicle formation. Cycles between the preautophagosomal structure/phagophore assembly site (PAS) and the cytoplasmic vesicle pool and supplies membrane for the growing autophagosome. Lipid scramblase activity plays a key role in preautophagosomal structure/phagophore assembly by distributing the phospholipids that arrive through atg-2 from the cytoplasmic to the luminal leaflet of the bilayer, thereby driving autophagosomal membrane expansion. Required for mitophagy. Also involved in endoplasmic reticulum-specific autophagic process and is essential for the survival of cells subjected to severe ER stress. Different machineries are required for anterograde trafficking to the PAS during either the Cvt pathway or bulk autophagy and for retrograde trafficking. In Neurospora crassa (strain ATCC 24698 / 74-OR23-1A / CBS 708.71 / DSM 1257 / FGSC 987), this protein is Autophagy-related protein 9 (apg-7).